The primary structure comprises 662 residues: Probable quinol oxidase subunit 1 (662 aa).

The next 2 helical transmembrane spans lie at 14 to 34 and 58 to 78; these read WMIT…IAVI and IMYL…ALLI. Fe(II)-heme a is bound at residue His102. Helical transmembrane passes span 103 to 123, 140 to 160, 187 to 207, 228 to 248, 273 to 293, 311 to 331, 336 to 356, and 376 to 396; these read GVIM…NIVV, VSFW…IIGG, IAIQ…FVTI, FITT…LALM, FFWV…FGIY, MVWA…HHFF, GALI…PTGV, and MLFS…GVML. The Cu cation site is built by His279, Tyr283, His328, and His329. The segment at residues 279-283 is a cross-link (1'-histidyl-3'-tyrosine (His-Tyr)); it reads HPEVY. His414 lines the heme a3 pocket. 5 consecutive transmembrane segments (helical) span residues 415–435, 451–471, 493–513, 587–604, and 608–627; these read FHYT…IFWY, CFWF…ILGL, ISTI…VSIV, PVGF…FFLI, and VIPA…YRSF. Residue His416 participates in Fe(II)-heme a binding.

This sequence belongs to the heme-copper respiratory oxidase family. The cofactor is Cu cation. It depends on ferriheme a as a cofactor. Requires Heme A3. as cofactor.

The protein localises to the cell membrane. It carries out the reaction 2 a quinol + O2 = 2 a quinone + 2 H2O. It participates in energy metabolism; oxidative phosphorylation. Catalyzes quinol oxidation with the concomitant reduction of oxygen to water. The sequence is that of Probable quinol oxidase subunit 1 (qoxB) from Staphylococcus aureus (strain USA300).